We begin with the raw amino-acid sequence, 713 residues long: Undecaprenyl-diphosphooligosaccharide--protein glycotransferase (713 aa).

Residues 1–11 (MLKKEYLKNPY) are Cytoplasmic-facing. The chain crosses the membrane as a helical span at residues 12–35 (LVLFAMIVLAYVFSVFCRFYWVWW). Residues 36–96 (ASEFNEYFFN…YWLYKITPFS (61 aa)) are Periplasmic-facing. Positions 52–54 (SND) match the DXD motif 1 motif. Aspartate 54 provides a ligand contact to Mn(2+). Residues 97-122 (FESIILYMSTFLSSLVVIPIILLANE) form a helical membrane-spanning segment. The Cytoplasmic portion of the chain corresponds to 123–125 (YKR). Residues 126-144 (PLMGFVAALLASVANSYYN) form a helical membrane-spanning segment. Residues 145–152 (RTMSGYYD) lie on the Periplasmic side of the membrane. Aspartate 152 is a Mn(2+) binding site. The short motif at 152–154 (DTD) is the DXD motif 2 element. A helical transmembrane segment spans residues 153–174 (TDMLVIVLPMFILFFMVRMILK). At 175–176 (KD) the chain is on the cytoplasmic side. Residues 177–192 (FFSLIALPLFIGIYLW) form a helical membrane-spanning segment. The Periplasmic portion of the chain corresponds to 193-197 (WYPSS). 194-196 (YPS) contacts [alpha-D-GalNAc-(1-&gt;4)]2-[beta-D-Glc-(1-&gt;3)]-[alpha-D-GalNAc-(1-&gt;4)]2-alpha-D-GalNAc-(1-&gt;3)-alpha-D-diNAcBac-tri-trans,hepta-cis-undecaprenyl diphosphate. A helical membrane pass occupies residues 198 to 215 (YTLNVALIGLFLIYTLIF). Residues 216 to 220 (HRKEK) lie on the Cytoplasmic side of the membrane. Residues 221 to 233 (IFYIAVILSSLTL) traverse the membrane as a helical segment. Over 234–237 (SNIA) the chain is Periplasmic. The helical transmembrane segment at 238–254 (WFYQSAIIVILFALFAL) threads the bilayer. The Cytoplasmic portion of the chain corresponds to 255-260 (EQKRLN). The helical transmembrane segment at 261–278 (FMIIGILGSATLIFLILS) threads the bilayer. At 279–324 (GGVDPILYQLKFYIFRSDESANLTQGFMYFNVNQTIQEVENVDFSE) the chain is on the periplasmic side. A [alpha-D-GalNAc-(1-&gt;4)]2-[beta-D-Glc-(1-&gt;3)]-[alpha-D-GalNAc-(1-&gt;4)]2-alpha-D-GalNAc-(1-&gt;3)-alpha-D-diNAcBac-tri-trans,hepta-cis-undecaprenyl diphosphate-binding site is contributed by tyrosine 291. The short motif at 313–316 (TIQE) is the TIXE motif element. Glutamate 316 lines the Mn(2+) pocket. Residues 325 to 347 (FMRRISGSEIVFLFSLFGFVWLL) form a helical membrane-spanning segment. Residues 348–352 (RKHKS) are Cytoplasmic-facing. The chain crosses the membrane as a helical span at residues 353–369 (MIMALPILVLGFLALKG). The Periplasmic segment spans residues 370–373 (GLRF). [alpha-D-GalNAc-(1-&gt;4)]2-[beta-D-Glc-(1-&gt;3)]-[alpha-D-GalNAc-(1-&gt;4)]2-alpha-D-GalNAc-(1-&gt;3)-alpha-D-diNAcBac-tri-trans,hepta-cis-undecaprenyl diphosphate is bound at residue arginine 372. Residues 374–396 (TIYSVPVMALGFGFLLSEFKAIL) traverse the membrane as a helical segment. At 397 to 406 (VKKYSQLTSN) the chain is on the cytoplasmic side. A helical transmembrane segment spans residues 407–427 (VCIVFATILTLAPVFIHIYNY). Topologically, residues 428 to 713 (KAPTVFSQNE…RDAKVFKLKI (286 aa)) are periplasmic. The interval 457–459 (WWD) is interacts with target acceptor peptide in protein substrate. The short motif at 457–461 (WWDYG) is the WWDYG motif element. [alpha-D-GalNAc-(1-&gt;4)]2-[beta-D-Glc-(1-&gt;3)]-[alpha-D-GalNAc-(1-&gt;4)]2-alpha-D-GalNAc-(1-&gt;3)-alpha-D-diNAcBac-tri-trans,hepta-cis-undecaprenyl diphosphate is bound at residue tyrosine 462. N-linked (DATDGlc) asparagine glycosylation occurs at asparagine 534. The short motif at 568–575 (MSLIFSTV) is the MI motif element.

It belongs to the STT3 family. The cofactor is Mg(2+). Requires Mn(2+) as cofactor.

The protein localises to the cell inner membrane. The enzyme catalyses tritrans,heptacis-undecaprenyl diphosphooligosaccharide + [protein]-L-asparagine = tritrans,heptacis-undecaprenyl diphosphate + a glycoprotein with the oligosaccharide chain attached by N-beta-D-glycosyl linkage to protein L-asparagine.. The protein operates within protein modification; protein glycosylation. Oligosaccharyl transferase (OST) that catalyzes the initial transfer of a defined glycan (GalNAc(2)GlcGalNAc(3)Bac(NAc)(2) in eubacteria, where Bac(NAc)(2) is di-N-acetyl bacillosamine) from the lipid carrier undecaprenol-pyrophosphate to an asparagine residue within an Asp/Glu-Asn-X-Ser/Thr consensus motif in nascent polypeptide chains, the first step in protein N-glycosylation. The polypeptide is Undecaprenyl-diphosphooligosaccharide--protein glycotransferase (pglB) (Campylobacter jejuni subsp. jejuni serotype O:2 (strain ATCC 700819 / NCTC 11168)).